Here is a 387-residue protein sequence, read N- to C-terminus: 1-deoxy-D-xylulose 5-phosphate reductoisomerase (387 aa).

8 residues coordinate NADPH: threonine 11, glycine 12, serine 13, isoleucine 14, glycine 37, arginine 38, glutamine 39, and asparagine 127. Lysine 128 lines the 1-deoxy-D-xylulose 5-phosphate pocket. Glutamate 129 is a binding site for NADPH. Aspartate 153 contacts Mn(2+). 1-deoxy-D-xylulose 5-phosphate-binding residues include serine 154, glutamate 155, serine 179, and histidine 200. Residue glutamate 155 coordinates Mn(2+). Glycine 206 lines the NADPH pocket. 4 residues coordinate 1-deoxy-D-xylulose 5-phosphate: serine 213, asparagine 218, lysine 219, and glutamate 222. Residue glutamate 222 coordinates Mn(2+).

This sequence belongs to the DXR family. It depends on Mg(2+) as a cofactor. The cofactor is Mn(2+).

It carries out the reaction 2-C-methyl-D-erythritol 4-phosphate + NADP(+) = 1-deoxy-D-xylulose 5-phosphate + NADPH + H(+). It participates in isoprenoid biosynthesis; isopentenyl diphosphate biosynthesis via DXP pathway; isopentenyl diphosphate from 1-deoxy-D-xylulose 5-phosphate: step 1/6. Its function is as follows. Catalyzes the NADPH-dependent rearrangement and reduction of 1-deoxy-D-xylulose-5-phosphate (DXP) to 2-C-methyl-D-erythritol 4-phosphate (MEP). The chain is 1-deoxy-D-xylulose 5-phosphate reductoisomerase from Symbiobacterium thermophilum (strain DSM 24528 / JCM 14929 / IAM 14863 / T).